Consider the following 397-residue polypeptide: Cercosporin biosynthesis regulatory protein CTB8 (397 aa).

Residues 26–53 (CTHCSSQKIRCTKERPACARCVNKGLLC) constitute a DNA-binding region (zn(2)-C6 fungal-type). Disordered regions lie at residues 62–92 (GTRRHSVRATPEPETTISNAPTSSVPPDSVK) and 173–198 (AEASTRPSSSSSPPSQRSDGGRATTH). The segment covering 74–87 (PETTISNAPTSSVP) has biased composition (polar residues). Residues 179–197 (PSSSSSPPSQRSDGGRATT) show a composition bias toward low complexity.

It localises to the nucleus. In terms of biological role, transcription regulator of the gene cluster that mediates the biosynthesis of cercosporin, a light-activated, non-host-selective toxin. The perylenequinone chromophore of cercosporin absorbs light energy to attain an electronically-activated triplet state and produces active oxygen species such as the hydroxyl radical, superoxide, hydrogen peroxide or singlet oxygen upon reaction with oxygen molecules. These reactive oxygen species cause damage to various cellular components including lipids, proteins and nucleic acids. The sequence is that of Cercosporin biosynthesis regulatory protein CTB8 from Cercospora nicotianae (Barn spot disease fungus).